The sequence spans 235 residues: Phosphate-specific transport system accessory protein PhoU homolog 2 (235 aa).

Belongs to the PhoU family. In terms of assembly, homodimer.

The protein resides in the cytoplasm. Plays a role in the regulation of phosphate uptake. The polypeptide is Phosphate-specific transport system accessory protein PhoU homolog 2 (phoU2) (Thermotoga maritima (strain ATCC 43589 / DSM 3109 / JCM 10099 / NBRC 100826 / MSB8)).